The chain runs to 813 residues: Molybdenum cofactor sulfurase (813 aa).

N6-(pyridoxal phosphate)lysine is present on Lys-228. Cys-391 is a catalytic residue. The disordered stretch occupies residues 625–670; sequence PSLRHAKAHMQKHQGPKRSAAIEKSSAHSFHDPPTPPDSDSENRKR. Positions 628-640 are enriched in basic residues; sequence RHAKAHMQKHQGP. In terms of domain architecture, MOSC spans 648–812; it reads KSSAHSFHDP…IKVGDKVSIG (165 aa).

Belongs to the class-V pyridoxal-phosphate-dependent aminotransferase family. MOCOS subfamily. Pyridoxal 5'-phosphate serves as cofactor.

It catalyses the reaction Mo-molybdopterin + L-cysteine + AH2 = thio-Mo-molybdopterin + L-alanine + A + H2O. In terms of biological role, sulfurates the molybdenum cofactor. Sulfation of molybdenum is essential for xanthine dehydrogenase (XDH) and aldehyde oxidase (ADO) enzymes in which molybdenum cofactor is liganded by 1 oxygen and 1 sulfur atom in active form. This chain is Molybdenum cofactor sulfurase, found in Botryotinia fuckeliana (strain B05.10) (Noble rot fungus).